Consider the following 106-residue polypeptide: Putative membrane protein insertion efficiency factor (106 aa).

It belongs to the UPF0161 family.

The protein resides in the cell inner membrane. Functionally, could be involved in insertion of integral membrane proteins into the membrane. This is Putative membrane protein insertion efficiency factor from Acinetobacter baumannii (strain SDF).